Here is a 414-residue protein sequence, read N- to C-terminus: Enolase (414 aa).

Glutamine 162 contacts (2R)-2-phosphoglycerate. Glutamate 204 (proton donor) is an active-site residue. 3 residues coordinate Mg(2+): aspartate 239, glutamate 280, and aspartate 307. 4 residues coordinate (2R)-2-phosphoglycerate: lysine 332, arginine 361, serine 362, and lysine 383. Residue lysine 332 is the Proton acceptor of the active site.

This sequence belongs to the enolase family. It depends on Mg(2+) as a cofactor.

It localises to the cytoplasm. It is found in the secreted. The protein resides in the cell surface. The catalysed reaction is (2R)-2-phosphoglycerate = phosphoenolpyruvate + H2O. It functions in the pathway carbohydrate degradation; glycolysis; pyruvate from D-glyceraldehyde 3-phosphate: step 4/5. Functionally, catalyzes the reversible conversion of 2-phosphoglycerate (2-PG) into phosphoenolpyruvate (PEP). It is essential for the degradation of carbohydrates via glycolysis. The chain is Enolase from Campylobacter lari (strain RM2100 / D67 / ATCC BAA-1060).